The chain runs to 387 residues: Putative purine permease 15 (387 aa).

Helical transmembrane passes span 44 to 64, 84 to 104, 122 to 142, 150 to 169, 179 to 199, 210 to 230, 252 to 272, 306 to 326, 329 to 349, and 354 to 374; these read WVTI…ARLL, TLLQ…HFLI, LAIT…FSDV, VFTL…SKYY, FISL…FSAG, YGII…LCII, FVVV…ILVA, VAWQ…SAVF, VISV…YNTH, and VFRG…IYII.

Belongs to the purine permeases (TC 2.A.7.14) family.

The protein localises to the membrane. The polypeptide is Putative purine permease 15 (PUP15) (Arabidopsis thaliana (Mouse-ear cress)).